We begin with the raw amino-acid sequence, 571 residues long: Urease subunit alpha (571 aa).

The 439-residue stretch at 133–571 (GGIDTHVHFI…LPLTQRYFLF (439 aa)) folds into the Urease domain. Positions 138, 140, and 221 each coordinate Ni(2+). Lys-221 is modified (N6-carboxylysine). Position 223 (His-223) interacts with substrate. Ni(2+)-binding residues include His-250 and His-276. The active-site Proton donor is the His-324. Asp-364 serves as a coordination point for Ni(2+).

Belongs to the metallo-dependent hydrolases superfamily. Urease alpha subunit family. As to quaternary structure, heterotrimer of UreA (gamma), UreB (beta) and UreC (alpha) subunits. Three heterotrimers associate to form the active enzyme. Requires Ni cation as cofactor. Carboxylation allows a single lysine to coordinate two nickel ions.

It localises to the cytoplasm. It catalyses the reaction urea + 2 H2O + H(+) = hydrogencarbonate + 2 NH4(+). It functions in the pathway nitrogen metabolism; urea degradation; CO(2) and NH(3) from urea (urease route): step 1/1. The protein is Urease subunit alpha of Staphylococcus aureus (strain bovine RF122 / ET3-1).